The chain runs to 226 residues: UPF0173 metal-dependent hydrolase GWCH70_2696 (226 aa).

Belongs to the UPF0173 family.

This chain is UPF0173 metal-dependent hydrolase GWCH70_2696, found in Geobacillus sp. (strain WCH70).